The chain runs to 417 residues: Multifunctional CCA protein (417 aa).

ATP contacts are provided by glycine 8 and arginine 11. The CTP site is built by glycine 8 and arginine 11. Residues aspartate 21 and aspartate 23 each coordinate Mg(2+). Residues arginine 91, arginine 137, and arginine 140 each coordinate ATP. Residues arginine 91, arginine 137, and arginine 140 each contribute to the CTP site. An HD domain is found at 225–326 (SGIHTLMTLQ…LNVLKKTDAF (102 aa)).

Belongs to the tRNA nucleotidyltransferase/poly(A) polymerase family. Bacterial CCA-adding enzyme type 1 subfamily. In terms of assembly, monomer. Can also form homodimers and oligomers. Mg(2+) serves as cofactor. Requires Ni(2+) as cofactor.

The catalysed reaction is a tRNA precursor + 2 CTP + ATP = a tRNA with a 3' CCA end + 3 diphosphate. It carries out the reaction a tRNA with a 3' CCA end + 2 CTP + ATP = a tRNA with a 3' CCACCA end + 3 diphosphate. In terms of biological role, catalyzes the addition and repair of the essential 3'-terminal CCA sequence in tRNAs without using a nucleic acid template. Adds these three nucleotides in the order of C, C, and A to the tRNA nucleotide-73, using CTP and ATP as substrates and producing inorganic pyrophosphate. tRNA 3'-terminal CCA addition is required both for tRNA processing and repair. Also involved in tRNA surveillance by mediating tandem CCA addition to generate a CCACCA at the 3' terminus of unstable tRNAs. While stable tRNAs receive only 3'-terminal CCA, unstable tRNAs are marked with CCACCA and rapidly degraded. This is Multifunctional CCA protein from Neisseria meningitidis serogroup C (strain 053442).